A 492-amino-acid polypeptide reads, in one-letter code: MKYKDLRDFIAMLEQQGKLKRVAHPISPYLEMTEIADRVLRAEGPALLFENPIKPDGTRYGYPVLANLFGTPERVAMGMGADSVSKLREIGQTLAYLKEPEPPKGIKDAFSKLPLLKDIWSMAPNVVKNAPCQEIVWEGEDVDLYQLPIQHCWPEDVAPLVTWGLTVTRGPHKKRQNLGIYRQQLIGKNKLIMRWLSHRGGALDYQEFRKLNPDTPYPVAVVLGCDPATILGAVTPVPDTLSEYQFAGLLRGSRTELVKCIGNDLQVPARAEIVLEGVIHPNETALEGPYGDHTGYYNEQDYFPVFTVERITMRENPIYHSTYTGKPPDEPAVLGVALNEVFVPLLQKQFPEITDFYLPPEGCSYRMAVVSMKKQYAGHAKRVMMGCWSFLRQFMYTKFIIVVDDDVNVRDWKEVIWAVTTRMDPVRDTVLVENTPIDYLDFASPVSGLGGKMGLDATNKWPGETDREWGRVIKKDPAVTAKIDGIWEELGL.

Residue Asn177 coordinates Mn(2+). Residues 180–182, 194–196, and 199–200 contribute to the prenylated FMN site; these read IYR, RWL, and RG. Glu243 contributes to the Mn(2+) binding site. The active-site Proton donor is Asp292.

The protein belongs to the UbiD family. Homohexamer. Prenylated FMN serves as cofactor. Requires Mn(2+) as cofactor.

It localises to the cell membrane. It carries out the reaction a 4-hydroxy-3-(all-trans-polyprenyl)benzoate + H(+) = a 2-(all-trans-polyprenyl)phenol + CO2. Its pathway is cofactor biosynthesis; ubiquinone biosynthesis. Catalyzes the decarboxylation of 3-octaprenyl-4-hydroxy benzoate to 2-octaprenylphenol, an intermediate step in ubiquinone biosynthesis. The sequence is that of 3-octaprenyl-4-hydroxybenzoate carboxy-lyase from Neisseria meningitidis serogroup B (strain ATCC BAA-335 / MC58).